The chain runs to 282 residues: Aldo-keto reductase MT3049 (282 aa).

Y57 acts as the Proton donor in catalysis. NADPH is bound by residues L197, V235, R237, S238, A239, R243, S246, N247, and R273.

Belongs to the aldo/keto reductase family.

The sequence is that of Aldo-keto reductase MT3049 from Mycobacterium tuberculosis (strain CDC 1551 / Oshkosh).